A 125-amino-acid polypeptide reads, in one-letter code: Protein ApaG (125 aa).

In terms of domain architecture, ApaG spans 1-125 (MINAPRVCVQ…FRLAIPSLIH (125 aa)).

The sequence is that of Protein ApaG from Pectobacterium carotovorum subsp. carotovorum (strain PC1).